A 150-amino-acid chain; its full sequence is MSHLIFNQPSEDKSALEDAGDFTPRFDDRGLITAIVTDAGDGELLMVAHMNAQALALTIQTGTAHYFSRSRGKIWKKGETSGNLQTVKEIRTDCDQDAIWLKVEVAGHDATCHTGRRSCFYRTVTLREGKPMLDIIDDERHFDPQDIYGK.

Residue Asp93 participates in Mg(2+) binding. Cys94 serves as a coordination point for Zn(2+). 2 residues coordinate Mg(2+): Asp95 and Asp97. 2 residues coordinate Zn(2+): Cys112 and Cys119.

Belongs to the PRA-CH family. In terms of assembly, homodimer. The cofactor is Mg(2+). Requires Zn(2+) as cofactor.

It is found in the cytoplasm. It catalyses the reaction 1-(5-phospho-beta-D-ribosyl)-5'-AMP + H2O = 1-(5-phospho-beta-D-ribosyl)-5-[(5-phospho-beta-D-ribosylamino)methylideneamino]imidazole-4-carboxamide. It functions in the pathway amino-acid biosynthesis; L-histidine biosynthesis; L-histidine from 5-phospho-alpha-D-ribose 1-diphosphate: step 3/9. Catalyzes the hydrolysis of the adenine ring of phosphoribosyl-AMP. This is Phosphoribosyl-AMP cyclohydrolase from Rhizobium etli (strain CIAT 652).